Consider the following 145-residue polypeptide: Large-conductance mechanosensitive channel (145 aa).

3 helical membrane-spanning segments follow: residues 10–30, 41–61, and 87–107; these read FALK…GAFA, IMPI…MFLI, and GNFI…FMMV.

Belongs to the MscL family. Homopentamer.

The protein localises to the cell inner membrane. In terms of biological role, channel that opens in response to stretch forces in the membrane lipid bilayer. May participate in the regulation of osmotic pressure changes within the cell. The polypeptide is Large-conductance mechanosensitive channel (Psychrobacter arcticus (strain DSM 17307 / VKM B-2377 / 273-4)).